Consider the following 24-residue polypeptide: 12 kDa protein (24 aa).

This is 12 kDa protein from Mycolicibacterium smegmatis (Mycobacterium smegmatis).